The chain runs to 366 residues: 3-dehydroquinate synthase (366 aa).

Residues 75–80 (DGEQYK), 109–113 (GVIGD), 133–134 (TT), K146, K155, and 173–176 (CLST) contribute to the NAD(+) site. Residues E188, H251, and H268 each contribute to the Zn(2+) site.

This sequence belongs to the sugar phosphate cyclases superfamily. Dehydroquinate synthase family. The cofactor is NAD(+). Co(2+) serves as cofactor. It depends on Zn(2+) as a cofactor.

The protein resides in the cytoplasm. The catalysed reaction is 7-phospho-2-dehydro-3-deoxy-D-arabino-heptonate = 3-dehydroquinate + phosphate. It functions in the pathway metabolic intermediate biosynthesis; chorismate biosynthesis; chorismate from D-erythrose 4-phosphate and phosphoenolpyruvate: step 2/7. In terms of biological role, catalyzes the conversion of 3-deoxy-D-arabino-heptulosonate 7-phosphate (DAHP) to dehydroquinate (DHQ). The sequence is that of 3-dehydroquinate synthase from Vibrio parahaemolyticus serotype O3:K6 (strain RIMD 2210633).